The sequence spans 363 residues: tRNA-specific 2-thiouridylase MnmA (363 aa).

ATP-binding positions include 13–20 and Met39; that span reads GLSGGVDS. The segment at 99-101 is interaction with target base in tRNA; it reads NPD. The active-site Nucleophile is the Cys104. An intrachain disulfide couples Cys104 to Cys200. Gly128 lines the ATP pocket. An interaction with tRNA region spans residues 150–152; the sequence is KDQ. The active-site Cysteine persulfide intermediate is Cys200. The interval 310-311 is interaction with tRNA; the sequence is RY.

The protein belongs to the MnmA/TRMU family.

It localises to the cytoplasm. It carries out the reaction S-sulfanyl-L-cysteinyl-[protein] + uridine(34) in tRNA + AH2 + ATP = 2-thiouridine(34) in tRNA + L-cysteinyl-[protein] + A + AMP + diphosphate + H(+). In terms of biological role, catalyzes the 2-thiolation of uridine at the wobble position (U34) of tRNA, leading to the formation of s(2)U34. This chain is tRNA-specific 2-thiouridylase MnmA, found in Ruthia magnifica subsp. Calyptogena magnifica.